A 299-amino-acid chain; its full sequence is MDPTLISLGALALAGAAATVSGCAEDLESDVGSQSNPNSQVQLGPQMGNIHRYFNKAISGEPVSYGLYVAVAGTIAWALINAGLNVVLAIIVGAGVAAIVHGAYSVSAFLGRTVGQSKKFGQPVYMDVLTSHIGPIVGHGFIAVFTMTLAAYLATTALGNPFPLPLVSLIFGITVGAIGSSTGDVHYGAEREYQKYPFGGGIPVANQGDIDIYAEYGVRNGLDSSYFCSRFGGPLTGLCFGLIIFLDGWRSILGNIIGGDLVTKTSIALLVGLLVVAVAAVINRKLEVYARNKYGPYRN.

Transmembrane regions (helical) follow at residues 57–79, 89–111, 132–154, 164–183, 227–246, and 261–283; these read AISG…AWAL, AIIV…AFLG, HIGP…AYLA, LPLV…SSTG, FCSR…IIFL, and LVTK…AVIN.

It belongs to the MtrE family. In terms of assembly, the complex is composed of 8 subunits; MtrA, MtrB, MtrC, MtrD, MtrE, MtrF, MtrG and MtrH.

The protein localises to the cell membrane. The enzyme catalyses 5-methyl-5,6,7,8-tetrahydromethanopterin + coenzyme M + 2 Na(+)(in) = 5,6,7,8-tetrahydromethanopterin + methyl-coenzyme M + 2 Na(+)(out). Its pathway is one-carbon metabolism; methanogenesis from CO(2); methyl-coenzyme M from 5,10-methylene-5,6,7,8-tetrahydromethanopterin: step 2/2. Part of a complex that catalyzes the formation of methyl-coenzyme M and tetrahydromethanopterin from coenzyme M and methyl-tetrahydromethanopterin. This is an energy-conserving, sodium-ion translocating step. The chain is Tetrahydromethanopterin S-methyltransferase subunit E from Methanococcus maripaludis (strain DSM 14266 / JCM 13030 / NBRC 101832 / S2 / LL).